The chain runs to 163 residues: Acetolactate synthase isozyme 3 small subunit (163 aa).

The ACT domain occupies 4–78; the sequence is ILSVLLENES…DVLRVSELGQ (75 aa).

It belongs to the acetolactate synthase small subunit family. In terms of assembly, dimer of large and small chains.

It carries out the reaction 2 pyruvate + H(+) = (2S)-2-acetolactate + CO2. The protein operates within amino-acid biosynthesis; L-isoleucine biosynthesis; L-isoleucine from 2-oxobutanoate: step 1/4. Its pathway is amino-acid biosynthesis; L-valine biosynthesis; L-valine from pyruvate: step 1/4. With respect to regulation, sensitive to valine inhibition. The sequence is that of Acetolactate synthase isozyme 3 small subunit (ilvH) from Salmonella typhimurium (strain LT2 / SGSC1412 / ATCC 700720).